The following is a 562-amino-acid chain: Beta-hexosaminidase (562 aa).

A signal peptide spans 1–22 (MVLDKMIIFHLLLWLCNVVVHA). N-linked (GlcNAc...) asparagine glycans are attached at residues N38, N52, N111, N337, N382, N396, and N463.

Belongs to the glycosyl hydrolase 20 family.

The enzyme catalyses Hydrolysis of terminal non-reducing N-acetyl-D-hexosamine residues in N-acetyl-beta-D-hexosaminides.. In terms of biological role, has a broad substrate specificity. The chain is Beta-hexosaminidase (HEX1) from Candida albicans (Yeast).